We begin with the raw amino-acid sequence, 101 residues long: MKPNFSKGLLPAIVIEEGTKEVLMLAYMNEEAYEKTLKTKRTWFYSRSRRSLWNKGETSGNVQHVQSLYLDCDQDAIVVVVKQVGPACHTGEKTCFHYKII.

Asp71 serves as a coordination point for Mg(2+). Residue Cys72 participates in Zn(2+) binding. 2 residues coordinate Mg(2+): Asp73 and Asp75. Zn(2+) is bound by residues Cys88 and Cys95.

This sequence belongs to the PRA-CH family. As to quaternary structure, homodimer. The cofactor is Mg(2+). It depends on Zn(2+) as a cofactor.

Its subcellular location is the cytoplasm. It catalyses the reaction 1-(5-phospho-beta-D-ribosyl)-5'-AMP + H2O = 1-(5-phospho-beta-D-ribosyl)-5-[(5-phospho-beta-D-ribosylamino)methylideneamino]imidazole-4-carboxamide. The protein operates within amino-acid biosynthesis; L-histidine biosynthesis; L-histidine from 5-phospho-alpha-D-ribose 1-diphosphate: step 3/9. Its function is as follows. Catalyzes the hydrolysis of the adenine ring of phosphoribosyl-AMP. In Bacillus cereus (strain AH187), this protein is Phosphoribosyl-AMP cyclohydrolase.